We begin with the raw amino-acid sequence, 179 residues long: 6,7-dimethyl-8-ribityllumazine synthase (179 aa).

5-amino-6-(D-ribitylamino)uracil-binding positions include Trp13, 45-47 (AVE), and 68-70 (VVI). 73-74 (DT) is a (2S)-2-hydroxy-3-oxobutyl phosphate binding site. His76 serves as the catalytic Proton donor. Phe101 provides a ligand contact to 5-amino-6-(D-ribitylamino)uracil. Residue Arg115 participates in (2S)-2-hydroxy-3-oxobutyl phosphate binding. A disordered region spans residues 157–179 (AKAAKKPAKAAAKTQKKKKKVRK).

This sequence belongs to the DMRL synthase family.

The enzyme catalyses (2S)-2-hydroxy-3-oxobutyl phosphate + 5-amino-6-(D-ribitylamino)uracil = 6,7-dimethyl-8-(1-D-ribityl)lumazine + phosphate + 2 H2O + H(+). The protein operates within cofactor biosynthesis; riboflavin biosynthesis; riboflavin from 2-hydroxy-3-oxobutyl phosphate and 5-amino-6-(D-ribitylamino)uracil: step 1/2. Functionally, catalyzes the formation of 6,7-dimethyl-8-ribityllumazine by condensation of 5-amino-6-(D-ribitylamino)uracil with 3,4-dihydroxy-2-butanone 4-phosphate. This is the penultimate step in the biosynthesis of riboflavin. The chain is 6,7-dimethyl-8-ribityllumazine synthase from Bdellovibrio bacteriovorus (strain ATCC 15356 / DSM 50701 / NCIMB 9529 / HD100).